Here is a 281-residue protein sequence, read N- to C-terminus: NADPH-dependent 7-cyano-7-deazaguanine reductase (281 aa).

Valine 81–serine 83 serves as a coordination point for substrate. Position 83–84 (serine 83–lysine 84) interacts with NADPH. Cysteine 188 acts as the Thioimide intermediate in catalysis. Aspartate 195 (proton donor) is an active-site residue. Histidine 227–glutamate 228 contacts substrate. Residue arginine 256–glycine 257 coordinates NADPH.

It belongs to the GTP cyclohydrolase I family. QueF type 2 subfamily. As to quaternary structure, homodimer.

It is found in the cytoplasm. It catalyses the reaction 7-aminomethyl-7-carbaguanine + 2 NADP(+) = 7-cyano-7-deazaguanine + 2 NADPH + 3 H(+). It functions in the pathway tRNA modification; tRNA-queuosine biosynthesis. Catalyzes the NADPH-dependent reduction of 7-cyano-7-deazaguanine (preQ0) to 7-aminomethyl-7-deazaguanine (preQ1). The protein is NADPH-dependent 7-cyano-7-deazaguanine reductase of Acidovorax ebreus (strain TPSY) (Diaphorobacter sp. (strain TPSY)).